The primary structure comprises 75 residues: Peptide Ctri10033 (75 aa).

Residues Met-1–Gly-22 form the signal peptide. The residue at position 43 (Arg-43) is an Arginine amide. Positions Glu-47–Tyr-75 are excised as a propeptide.

The protein belongs to the non-disulfide-bridged peptide (NDBP) superfamily. Short antimicrobial peptide (group 4) family. Expressed by the venom gland.

Its subcellular location is the secreted. In Chaerilus tricostatus (Scorpion), this protein is Peptide Ctri10033.